A 369-amino-acid chain; its full sequence is Protein FAM187B (369 aa).

Residues 1-17 form the signal peptide; the sequence is MPPMLWLLLHFAAPALG. Residues 18–335 lie on the Extracellular side of the membrane; sequence FYFSISCPSG…RADSVLKGLK (318 aa). Asn-45, Asn-68, and Asn-130 each carry an N-linked (GlcNAc...) asparagine glycan. The chain crosses the membrane as a helical span at residues 336–356; that stretch reads LVLLVVTVLALLGALLKCIHP. The Cytoplasmic portion of the chain corresponds to 357 to 369; that stretch reads SPGRRSTQVLVVK.

It belongs to the FAM187 family.

The protein localises to the membrane. The protein is Protein FAM187B (FAM187B) of Homo sapiens (Human).